We begin with the raw amino-acid sequence, 346 residues long: MRLVHLDLKGAPPKVCYLSEIFPLFRALGANGILIEYEDMFPYEGHLRLLRAKHAYSPSEIKEILHLATLNELEVIPLVQTFGHMEFVLKHEALAHLREVARFPNTLNPHKEESLALVTAMIDQVMELHPGARWFHVGCDEVYYLGEGETSRQWLQQEPNSKAKLCLSHMEAVASHMRARYPTTTPLMWDDMLRDIPEDQLSGSRVPQLVEPVLWDYGADLDLHGKALLVEKYRKSGFSWLWAASAFKGATGVNQSLTPIEHHLRNHLQWLQVAGSVPADTLRGIILTGWQRYDHFSVLCELLPVGIPSLAVCLQALLHGDFAENVKARVENFLGISSLEEMSFRR.

Glu141 functions as the Proton donor in the catalytic mechanism.

It belongs to the glycosyl hydrolase 20 family. As to quaternary structure, homodimer; disulfide-linked.

The protein localises to the cytoplasm. It is found in the nucleus. The protein resides in the extracellular vesicle. It carries out the reaction Hydrolysis of terminal non-reducing N-acetyl-D-hexosamine residues in N-acetyl-beta-D-hexosaminides.. With respect to regulation, inhibited by O-(2-acetamido-2-deoxy-D-glucopyranosylidene)amino N-phenylcarbamate (PUGNAc). Inhibited by galacto-NAG-thiazoline. In terms of biological role, has hexosaminidase activity. Responsible for the cleavage of the monosaccharides N-acetylglucosamine (GlcNAc) and N-acetylgalactosamine (GalNAc) from cellular substrates. Has a preference for galactosaminide over glucosaminide substrates. This chain is Hexosaminidase D, found in Bos taurus (Bovine).